Here is a 241-residue protein sequence, read N- to C-terminus: Glutamate/aspartate import ATP-binding protein GltL (241 aa).

The region spanning 2 to 236 (ITLKNVSKWY…PKSDRAKDFL (235 aa)) is the ABC transporter domain. Position 34 to 41 (34 to 41 (GPSGSGKS)) interacts with ATP.

Belongs to the ABC transporter superfamily. In terms of assembly, the complex is composed of two ATP-binding proteins (GltL), two transmembrane proteins (GltJ and GltK) and a solute-binding protein (GltI).

It is found in the cell inner membrane. It catalyses the reaction a polar amino acid(out) + ATP + H2O = a polar amino acid(in) + ADP + phosphate + H(+). It carries out the reaction L-glutamate(out) + ATP + H2O = L-glutamate(in) + ADP + phosphate + H(+). The catalysed reaction is L-aspartate(out) + ATP + H2O = L-aspartate(in) + ADP + phosphate + H(+). Functionally, part of the ABC transporter complex GltIJKL involved in glutamate and aspartate uptake. Probably responsible for energy coupling to the transport system. The polypeptide is Glutamate/aspartate import ATP-binding protein GltL (gltL) (Escherichia coli O157:H7).